The primary structure comprises 668 residues: MAP kinase kinase PBS2 (668 aa).

A compositionally biased stretch (basic and acidic residues) spans 1 to 15; that stretch reads MEDKFANLSLHEKTG. Disordered stretches follow at residues 1–43, 61–120, and 181–313; these read MEDK…SSHY, RALK…ASSK, and NPNR…GSSG. Composition is skewed to polar residues over residues 16 to 43, 68 to 91, and 104 to 120; these read KSSI…SSHY, SVGS…QQIV, and SKVS…ASSK. The residue at position 68 (Ser-68) is a Phosphoserine. Low complexity predominate over residues 239–250; that stretch reads AQQPQQFAPSPS. Phosphoserine is present on Ser-269. Polar residues predominate over residues 270-300; sequence NPGSLINGVQSTSTSSSTEGPHDTVGTTPRT. The segment covering 301 to 310 has biased composition (low complexity); the sequence is GNSNNSSNSG. A Protein kinase domain is found at 360–623; the sequence is LEFLDELGHG…YAALTEHPWL (264 aa). ATP is bound by residues 366 to 374 and Lys-389; that span reads LGHGNYGNV. The active-site Proton acceptor is Asp-485. The residue at position 514 (Ser-514) is a Phosphoserine. The residue at position 518 (Thr-518) is a Phosphothreonine.

This sequence belongs to the protein kinase superfamily. STE Ser/Thr protein kinase family. MAP kinase kinase subfamily. As to quaternary structure, interacts with NBP2, PTC1, SHO1 and STE11. In terms of processing, activated by phosphorylation by SSK2 or SSK22. Ser/Thr phosphorylation is also necessary for SHO1-mediated activation.

The protein resides in the cytoplasm. The enzyme catalyses L-seryl-[protein] + ATP = O-phospho-L-seryl-[protein] + ADP + H(+). The catalysed reaction is L-threonyl-[protein] + ATP = O-phospho-L-threonyl-[protein] + ADP + H(+). It catalyses the reaction L-tyrosyl-[protein] + ATP = O-phospho-L-tyrosyl-[protein] + ADP + H(+). In terms of biological role, kinase involved in a signal transduction pathway that is activated by changes in the osmolarity of the extracellular environment. Activates the MAP kinase HOG1 by concomitant phosphorylation at 'Thr-174' and 'Tyr-176'. The protein is MAP kinase kinase PBS2 (PBS2) of Saccharomyces cerevisiae (strain ATCC 204508 / S288c) (Baker's yeast).